Reading from the N-terminus, the 514-residue chain is Na(+)/H(+) antiporter NhaB (514 aa).

A run of 12 helical transmembrane segments spans residues 23–43 (LALL…PFIA), 63–83 (PLLP…TSAA), 97–117 (LLLM…LFIF), 120–140 (LLLS…AAAF), 144–164 (FLDA…FYGI), 202–222 (LMMH…VGEP), 238–258 (FFLR…LTCM), 303–323 (AVIG…VGLI), 357–377 (LTVF…APII), 391–411 (LFYL…VGTI), 447–467 (ATPN…APLI), and 475–495 (VWMA…CVEF).

The protein belongs to the NhaB Na(+)/H(+) (TC 2.A.34) antiporter family.

It localises to the cell inner membrane. It carries out the reaction 2 Na(+)(in) + 3 H(+)(out) = 2 Na(+)(out) + 3 H(+)(in). Its function is as follows. Na(+)/H(+) antiporter that extrudes sodium in exchange for external protons. In Salmonella gallinarum (strain 287/91 / NCTC 13346), this protein is Na(+)/H(+) antiporter NhaB.